A 161-amino-acid polypeptide reads, in one-letter code: Phosphopantetheine adenylyltransferase (161 aa).

Substrate is bound at residue S10. ATP contacts are provided by residues 10-11 and H18; that span reads SF. K42, A75, and R89 together coordinate substrate. ATP is bound by residues 90–92, E100, and 125–131; these read GLR and LSPISSS.

This sequence belongs to the bacterial CoaD family. As to quaternary structure, homohexamer. The cofactor is Mg(2+).

Its subcellular location is the cytoplasm. The enzyme catalyses (R)-4'-phosphopantetheine + ATP + H(+) = 3'-dephospho-CoA + diphosphate. The protein operates within cofactor biosynthesis; coenzyme A biosynthesis; CoA from (R)-pantothenate: step 4/5. Its function is as follows. Reversibly transfers an adenylyl group from ATP to 4'-phosphopantetheine, yielding dephospho-CoA (dPCoA) and pyrophosphate. The protein is Phosphopantetheine adenylyltransferase of Streptococcus agalactiae serotype Ia (strain ATCC 27591 / A909 / CDC SS700).